Here is a 491-residue protein sequence, read N- to C-terminus: Probable cysteine proteinase 024R (491 aa).

Residues C132, H325, and N355 contribute to the active site. Residues 467–487 form a helical membrane-spanning segment; sequence ALDLALLVLPALLIVIVVLIG.

This sequence belongs to the peptidase C1 family.

The protein resides in the membrane. Probable cysteine protease. The protein is Probable cysteine proteinase 024R of Invertebrate iridescent virus 3 (IIV-3).